The primary structure comprises 124 residues: Late histone H2B.2.2 (124 aa).

Residues 1 to 32 (MPAKQTSGKGAKKAGKAKGRPSGASKTRRRKR) are disordered. Positions 10–19 (GAKKAGKAKG) are enriched in basic residues. Ser-111 is a glycosylation site (O-linked (GlcNAc) serine). Lys-119 participates in a covalent cross-link: Glycyl lysine isopeptide (Lys-Gly) (interchain with G-Cter in ubiquitin).

Belongs to the histone H2B family. In terms of assembly, the nucleosome is a histone octamer containing two molecules each of H2A, H2B, H3 and H4 assembled in one H3-H4 heterotetramer and two H2A-H2B heterodimers. The octamer wraps approximately 147 bp of DNA. In terms of processing, monoubiquitination of Lys-119 gives a specific tag for epigenetic transcriptional activation and is also prerequisite for histone H3 'Lys-4' and 'Lys-79' methylation. GlcNAcylation at Ser-111 promotes monoubiquitination of Lys-119. It fluctuates in response to extracellular glucose, and associates with transcribed genes.

It localises to the nucleus. It is found in the chromosome. Core component of nucleosome. Nucleosomes wrap and compact DNA into chromatin, limiting DNA accessibility to the cellular machineries which require DNA as a template. Histones thereby play a central role in transcription regulation, DNA repair, DNA replication and chromosomal stability. DNA accessibility is regulated via a complex set of post-translational modifications of histones, also called histone code, and nucleosome remodeling. The chain is Late histone H2B.2.2 from Psammechinus miliaris (Green sea urchin).